The chain runs to 108 residues: MMKGQLAGLMRQAQQMQENMKKAQDALADILVEGAAGGGLVKVTMSCRNDVKRIAIDPSLLADDKDMLEDLVAAAFNDALRKAEATSQEKMSALTAGLPLPPGMKLPF.

This sequence belongs to the YbaB/EbfC family. As to quaternary structure, homodimer.

It is found in the cytoplasm. Its subcellular location is the nucleoid. Binds to DNA and alters its conformation. May be involved in regulation of gene expression, nucleoid organization and DNA protection. In Bordetella avium (strain 197N), this protein is Nucleoid-associated protein BAV0915.